The sequence spans 228 residues: Carboxy-S-adenosyl-L-methionine synthase (228 aa).

S-adenosyl-L-methionine-binding positions include Y30, 55–57 (GSS), 79–80 (DN), and 103–104 (DV).

It belongs to the class I-like SAM-binding methyltransferase superfamily. Cx-SAM synthase family.

It catalyses the reaction prephenate + S-adenosyl-L-methionine = carboxy-S-adenosyl-L-methionine + 3-phenylpyruvate + H2O. Its function is as follows. Catalyzes the conversion of S-adenosyl-L-methionine (SAM) to carboxy-S-adenosyl-L-methionine (Cx-SAM). This is Carboxy-S-adenosyl-L-methionine synthase from Staphylococcus epidermidis (strain ATCC 35984 / DSM 28319 / BCRC 17069 / CCUG 31568 / BM 3577 / RP62A).